Reading from the N-terminus, the 285-residue chain is Bifunctional protein FolD (285 aa).

NADP(+)-binding positions include 163–165 and Ser188; that span reads GRS.

It belongs to the tetrahydrofolate dehydrogenase/cyclohydrolase family. In terms of assembly, homodimer.

It carries out the reaction (6R)-5,10-methylene-5,6,7,8-tetrahydrofolate + NADP(+) = (6R)-5,10-methenyltetrahydrofolate + NADPH. The enzyme catalyses (6R)-5,10-methenyltetrahydrofolate + H2O = (6R)-10-formyltetrahydrofolate + H(+). It participates in one-carbon metabolism; tetrahydrofolate interconversion. Its function is as follows. Catalyzes the oxidation of 5,10-methylenetetrahydrofolate to 5,10-methenyltetrahydrofolate and then the hydrolysis of 5,10-methenyltetrahydrofolate to 10-formyltetrahydrofolate. The sequence is that of Bifunctional protein FolD from Lactococcus lactis subsp. cremoris (strain MG1363).